The primary structure comprises 137 residues: MIWKRHMTLEALNATSVGTLVEHLGIEYTRLGDDLLEATMPVDTRTHQPFGLLHGGASAALAETLGSMAGYLTTRDGQCVVGTEISASHHRAVSQGQVRGVCQPLHLGRQSQCWEIVIYDEQGRRCCTSRLSTAVMG.

The Nucleophile or proton acceptor role is filled by Glu63.

This sequence belongs to the thioesterase PaaI family. In terms of assembly, homotetramer. Dimer of dimers. Interacts specifically with the aryl carrier protein (ArCP) domain of EntB.

It is found in the cytoplasm. The protein operates within siderophore biosynthesis; enterobactin biosynthesis. Its function is as follows. Required for optimal enterobactin synthesis. Acts as a proofreading enzyme that prevents EntB misacylation by hydrolyzing the thioester bound existing between EntB and wrongly charged molecules. This chain is Proofreading thioesterase EntH, found in Cronobacter turicensis (strain DSM 18703 / CCUG 55852 / LMG 23827 / z3032).